The chain runs to 259 residues: Transcription factor bHLH125 (259 aa).

The bHLH domain maps to 73–125; sequence SKKMKHRDIERQRRQEVSSLFKRLRTLLPFQYIQGKRSTSDHIVQAVNYIKDL.

As to quaternary structure, homodimer.

Its subcellular location is the nucleus. This is Transcription factor bHLH125 (BHLH125) from Arabidopsis thaliana (Mouse-ear cress).